The sequence spans 562 residues: NAD-dependent malic enzyme (562 aa).

The active-site Proton donor is Tyr-101. Arg-154 lines the NAD(+) pocket. Catalysis depends on Lys-172, which acts as the Proton acceptor. Residues Glu-243, Asp-244, and Asp-267 each coordinate a divalent metal cation. The NAD(+) site is built by Asp-267 and Asn-415.

It belongs to the malic enzymes family. In terms of assembly, homotetramer. The cofactor is Mg(2+). It depends on Mn(2+) as a cofactor.

The catalysed reaction is (S)-malate + NAD(+) = pyruvate + CO2 + NADH. The enzyme catalyses oxaloacetate + H(+) = pyruvate + CO2. The sequence is that of NAD-dependent malic enzyme from Shewanella loihica (strain ATCC BAA-1088 / PV-4).